A 437-amino-acid chain; its full sequence is Proton/glutamate-aspartate symporter (437 aa).

At methionine 1–lysine 5 the chain is on the cytoplasmic side. A helical transmembrane segment spans residues phenylalanine 6 to leucine 26. Residues histidine 27–histidine 50 are Periplasmic-facing. A helical membrane pass occupies residues leucine 51–valine 71. Residues glycine 72–threonine 84 lie on the Cytoplasmic side of the membrane. The helical transmembrane segment at isoleucine 85–valine 105 threads the bilayer. The Periplasmic segment spans residues phenylalanine 106–glutamate 159. A helical transmembrane segment spans residues methionine 160–threonine 180. Topologically, residues histidine 181–glycine 210 are cytoplasmic. Residues valine 211–alanine 231 form a helical membrane-spanning segment. Position 232 (lysine 232) is a topological domain, periplasmic. The helical transmembrane segment at leucine 233–alanine 253 threads the bilayer. The Cytoplasmic segment spans residues arginine 254–glutamate 292. A helical transmembrane segment spans residues alanine 293–leucine 313. The Periplasmic segment spans residues aspartate 314–alanine 324. Residues isoleucine 325 to leucine 345 form a helical membrane-spanning segment. The Cytoplasmic segment spans residues threonine 346–serine 361. A helical transmembrane segment spans residues phenylalanine 362–isoleucine 382. Residues alanine 383–arginine 387 lie on the Periplasmic side of the membrane. Residues isoleucine 388–isoleucine 408 traverse the membrane as a helical segment. Over alanine 409–glutamine 437 the chain is Cytoplasmic.

This sequence belongs to the dicarboxylate/amino acid:cation symporter (DAACS) (TC 2.A.23) family. GltP subfamily.

The protein localises to the cell inner membrane. Its activity is regulated as follows. Glutamate uptake is inhibited by L-cysteate and beta-hydroxyaspartate. Inhibited by the uncoupler carbonylcyanide m-chlorophenylhydrazone (CCCP). In terms of biological role, catalyzes the proton-dependent, binding-protein-independent transport of glutamate and aspartate. This Escherichia coli (strain K12) protein is Proton/glutamate-aspartate symporter.